A 499-amino-acid polypeptide reads, in one-letter code: Neuropeptide CCHamide-1 receptor (499 aa).

Residues 1–85 lie on the Extracellular side of the membrane; that stretch reads MIANLVSMET…GRRPETYIVP (85 aa). 2 N-linked (GlcNAc...) asparagine glycosylation sites follow: Asn33 and Asn61. A helical membrane pass occupies residues 86–106; it reads ILFALIFVVGVLGNGTLIVVF. Topologically, residues 107–117 are cytoplasmic; it reads LSVRQMRNVPN. The chain crosses the membrane as a helical span at residues 118 to 138; sequence TYILSLALADLLVIITTVPLA. Residues 139 to 162 lie on the Extracellular side of the membrane; the sequence is STVYTVEYWPYGSFLCSLSEFMKD. Residues Cys154 and Cys240 are joined by a disulfide bond. A helical membrane pass occupies residues 163–183; sequence VSIGVSVFTLTALSGDRYFAI. The Cytoplasmic segment spans residues 184–203; it reads VDPLRKFHAHGGGRRATRMT. The chain crosses the membrane as a helical span at residues 204 to 224; the sequence is LATAVSIWLLAILCGLPALIG. The Extracellular segment spans residues 225 to 259; it reads SNLKHLGINEKSIVICYPYPEEWGINYAKSMVLLH. Residues 260–280 traverse the membrane as a helical segment; that stretch reads FLVYYAIPLVVIAVFYVLIAL. Topologically, residues 281–309 are cytoplasmic; the sequence is HLMYSASVPGEIQGAVRQVRARRKVAVTV. Residues 310–330 form a helical membrane-spanning segment; that stretch reads LAFVVIFGICFLPYHVFFLWF. Over 331–348 the chain is Extracellular; it reads YFWPTAQDDYNAFWHVLR. The chain crosses the membrane as a helical span at residues 349–369; that stretch reads IVAYCMSFANSCANPVALYFV. Residues 370–499 lie on the Cytoplasmic side of the membrane; that stretch reads SGAFRKHFNR…PAKFQESLLN (130 aa).

The protein belongs to the G-protein coupled receptor 1 family. In terms of tissue distribution, low levels in larval brain and gut with higher levels in adult brain and gut. In the brain expression is widely distributed, including strong expression in the mushroom bodies. Expressed weakly in s-LNv (small ventral lateral neurons) and strongly in l-LNv (large ventral lateral neurons), but not in other clock neurons.

It is found in the cell membrane. Its function is as follows. Receptor for the neuropeptide CCHamide-1. Plays a role in the modulation of starvation-induced olfactory behavior where starved flies show increased responsiveness to food odorants, repellants and pheromones. Contributes to regulation of sleep latency (the time required to fall asleep), amount of sleep and depth of sleep (arousability). Involved in modulation of PDP1 and PDF levels in s-LNv (small ventral lateral neurons) clock neurons in response to CCHa1 released by DN1a (anterior dorsal neurons 1) clock neurons, to regulate morning activity. In a subset of dopaminergic cells in the protocerebral anterior medial (PAM) cluster involved in suppressing arousability in response to CCHa1 secreted by gut enteroendocrine cells. This is Neuropeptide CCHamide-1 receptor from Drosophila melanogaster (Fruit fly).